The following is an 83-amino-acid chain: Greglin (83 aa).

3 positions are modified to phosphoserine: S8, S11, and S15. Disulfide bonds link C21–C55, C25–C48, C33–C69, and C53–C76.

Serine protease inhibitor. Inhibits porcine pancreatic elastase with a Ki of 58.3 nM, human neutrophil elastase with a Ki of 3.6 nM, cathepsin G with a Ki of 153.5 nM, chymotrypsin with a Ki of 26.7 nM and subtilisin with a Ki of 0.68 nM. Does not inhibit neutrophil protease 3 or pancreatic trypsin. This chain is Greglin, found in Schistocerca gregaria (Desert locust).